Here is a 1003-residue protein sequence, read N- to C-terminus: PHD finger protein 12 (1003 aa).

A disordered region spans residues 29–59 (APPKTDEAEKRSRKPEKESRRSGRATNHDSC). Over residues 32–59 (KTDEAEKRSRKPEKESRRSGRATNHDSC) the composition is skewed to basic and acidic residues. The segment at 56–105 (HDSCDSCKEGGDLLCCDHCPAAFHLQCCNPPLSEEMLPPGEWMCHRCTVR) adopts a PHD-type 1 zinc-finger fold. Positions 59, 61, 62, 79, and 82 each coordinate Zn(2+). 2 disordered regions span residues 110–183 (EQKK…HNDV) and 234–255 (TTAL…KNVK). Phosphoserine occurs at positions 131 and 134. Positions 138 to 161 (LLDRPASKTELKAIAHARILERRA) are enriched in basic and acidic residues. A compositionally biased stretch (polar residues) spans 165-178 (GTPTSNASTETPTS). The SIN3 interacting domain 1 stretch occupies residues 202–241 (VQPQLRRPFELLIAAAMERNPTQFQLPNELTCTTALPGSS). A PHD-type 2; atypical zinc finger spans residues 271-321 (VKVCFTCNRSCRVAPLIQCDYCPLLFHMDCLEPPLTAMPLGRWMCPNHIEH). Residues Cys274, Cys277, Cys289, Cys292, His297, Cys300, Cys315, and His318 each coordinate Zn(2+). The interval 328-364 (NLTLSNRCQVFDRFQDTISQHVVKVDFLNRIHKKHPP) is SIN3 interacting domain 2. A Glycyl lysine isopeptide (Lys-Gly) (interchain with G-Cter in SUMO2) cross-link involves residue Lys467. Disordered regions lie at residues 531 to 583 (KAPC…GWPR) and 641 to 671 (HRKT…VLTP). Ser555 carries the phosphoserine modification. 2 positions are modified to phosphothreonine: Thr557 and Thr570. Residues 641-656 (HRKTVQSQIGPSSTES) are compositionally biased toward polar residues. Thr670 bears the Phosphothreonine mark. Residues 814-868 (LYIGTGADMDVCLTNYGHCNYVSGKHACIFYDENTKHYELLNYSEHGTTVDNVLY) form the FHA domain. The disordered stretch occupies residues 894-922 (RRRHQKQDEEPSEEAAMMSSQAQGPQRRP). Lys899 is covalently cross-linked (Glycyl lysine isopeptide (Lys-Gly) (interchain with G-Cter in SUMO2)). A compositionally biased stretch (low complexity) spans 907–916 (EAAMMSSQAQ). Glycyl lysine isopeptide (Lys-Gly) (interchain with G-Cter in SUMO2) cross-links involve residues Lys972, Lys986, and Lys990.

As to quaternary structure, component of SIN3 complexes. Interacts with SIN3A in a complex composed of HDAC1, SAP30 and SIN3A. Component of the SIN3B complex, which includes SIN3B, HDAC2 or HDAC1, PHF12 and MORF4L1; interacts directly with all subunits. Interacts with TLE5. Expressed mainly in heart, brain, lung, liver and testis.

It is found in the nucleus. In terms of biological role, transcriptional repressor acting as key scaffolding subunit of SIN3 complexes which contributes to complex assembly by contacting each core subunit domain, stabilizes the complex and constitutes the substrate receptor by recruiting the H3 histone tail. SIN3 complexes are composed of a SIN3 scaffold subunit, one catalytic core (HDAC1 or HDAC2) and 2 chromatin targeting modules. SIN3B complex represses transcription and counteracts the histone acetyltransferase activity of EP300 through the recognition H3K27ac marks by PHF12 and the activity of the histone deacetylase HDAC2. SIN3B complex is recruited downstream of the constitutively active genes transcriptional start sites through interaction with histones and mitigates histone acetylation and RNA polymerase II progression within transcribed regions contributing to the regulation of transcription. May also repress transcription in a SIN3A-independent manner through recruitment of functional TLE5 complexes to DNA. May also play a role in ribosomal biogenesis. The chain is PHD finger protein 12 from Mus musculus (Mouse).